The following is a 40-amino-acid chain: Muscarinic m1-toxin4 (40 aa).

The cysteines at positions 3 and 24 are disulfide-linked.

It belongs to the three-finger toxin family. Short-chain subfamily. Aminergic toxin sub-subfamily. As to quaternary structure, monomer. In terms of processing, contains 4 disulfide bonds. As to expression, expressed by the venom gland.

The protein resides in the secreted. Its function is as follows. Binds irreversibly and specifically to M1 (CHRM1) muscarinic acetylcholine receptors, blocking further binding of antagonists and preventing the action of agonists. The chain is Muscarinic m1-toxin4 from Dendroaspis angusticeps (Eastern green mamba).